Consider the following 237-residue polypeptide: Sugar fermentation stimulation protein homolog (237 aa).

This sequence belongs to the SfsA family.

The protein is Sugar fermentation stimulation protein homolog of Pseudomonas putida (strain ATCC 700007 / DSM 6899 / JCM 31910 / BCRC 17059 / LMG 24140 / F1).